Here is a 492-residue protein sequence, read N- to C-terminus: N-succinylglutamate 5-semialdehyde dehydrogenase (492 aa).

220-225 (GSANTG) is an NAD(+) binding site. Residues E243 and C277 contribute to the active site.

The protein belongs to the aldehyde dehydrogenase family. AstD subfamily.

The enzyme catalyses N-succinyl-L-glutamate 5-semialdehyde + NAD(+) + H2O = N-succinyl-L-glutamate + NADH + 2 H(+). It participates in amino-acid degradation; L-arginine degradation via AST pathway; L-glutamate and succinate from L-arginine: step 4/5. Catalyzes the NAD-dependent reduction of succinylglutamate semialdehyde into succinylglutamate. The chain is N-succinylglutamate 5-semialdehyde dehydrogenase from Escherichia coli (strain K12 / MC4100 / BW2952).